Here is a 256-residue protein sequence, read N- to C-terminus: Alcohol dehydrogenase (256 aa).

12-35 lines the NAD(+) pocket; that stretch reads FVAGLGGIGLDTSKELVKRDLKNL. Ser140 serves as a coordination point for substrate. Residue Tyr153 is the Proton acceptor of the active site.

This sequence belongs to the short-chain dehydrogenases/reductases (SDR) family. As to quaternary structure, homodimer.

The enzyme catalyses a primary alcohol + NAD(+) = an aldehyde + NADH + H(+). It carries out the reaction a secondary alcohol + NAD(+) = a ketone + NADH + H(+). The protein is Alcohol dehydrogenase (Adh) of Drosophila tsacasi (Fruit fly).